A 342-amino-acid chain; its full sequence is Phosphoribosylformylglycinamidine cyclo-ligase (342 aa).

The protein belongs to the AIR synthase family.

It is found in the cytoplasm. The enzyme catalyses 2-formamido-N(1)-(5-O-phospho-beta-D-ribosyl)acetamidine + ATP = 5-amino-1-(5-phospho-beta-D-ribosyl)imidazole + ADP + phosphate + H(+). The protein operates within purine metabolism; IMP biosynthesis via de novo pathway; 5-amino-1-(5-phospho-D-ribosyl)imidazole from N(2)-formyl-N(1)-(5-phospho-D-ribosyl)glycinamide: step 2/2. The polypeptide is Phosphoribosylformylglycinamidine cyclo-ligase (Gloeothece citriformis (strain PCC 7424) (Cyanothece sp. (strain PCC 7424))).